Reading from the N-terminus, the 287-residue chain is S-methyl-5'-thioadenosine phosphorylase (287 aa).

Phosphate is bound by residues Thr13 and 55-56 (RH). Residue Met186 participates in substrate binding. Residue Thr187 coordinates phosphate. 210 to 212 (DYD) is a binding site for substrate.

It belongs to the PNP/MTAP phosphorylase family. MTAP subfamily. In terms of assembly, homohexamer. Dimer of a homotrimer.

The catalysed reaction is S-methyl-5'-thioadenosine + phosphate = 5-(methylsulfanyl)-alpha-D-ribose 1-phosphate + adenine. The protein operates within amino-acid biosynthesis; L-methionine biosynthesis via salvage pathway; S-methyl-5-thio-alpha-D-ribose 1-phosphate from S-methyl-5'-thioadenosine (phosphorylase route): step 1/1. In terms of biological role, catalyzes the reversible phosphorylation of S-methyl-5'-thioadenosine (MTA) to adenine and 5-methylthioribose-1-phosphate. Involved in the breakdown of MTA, a major by-product of polyamine biosynthesis. Responsible for the first step in the methionine salvage pathway after MTA has been generated from S-adenosylmethionine. Has broad substrate specificity with 6-aminopurine nucleosides as preferred substrates. The chain is S-methyl-5'-thioadenosine phosphorylase from Leptospira interrogans serogroup Icterohaemorrhagiae serovar copenhageni (strain Fiocruz L1-130).